Reading from the N-terminus, the 197-residue chain is Phosphoheptose isomerase (197 aa).

The SIS domain occupies 37–197 (MLQCLMNDGK…CIDSVLLEGM (161 aa)). 52-54 (NGG) contacts substrate. Residues H61 and E65 each contribute to the Zn(2+) site. Substrate is bound by residues E65, 94 to 95 (ND), 120 to 122 (STS), S125, and Q175. Zn(2+) is bound by residues Q175 and H183.

The protein belongs to the SIS family. GmhA subfamily. In terms of assembly, homotetramer. Requires Zn(2+) as cofactor.

It is found in the cytoplasm. The catalysed reaction is 2 D-sedoheptulose 7-phosphate = D-glycero-alpha-D-manno-heptose 7-phosphate + D-glycero-beta-D-manno-heptose 7-phosphate. Its pathway is carbohydrate biosynthesis; D-glycero-D-manno-heptose 7-phosphate biosynthesis; D-glycero-alpha-D-manno-heptose 7-phosphate and D-glycero-beta-D-manno-heptose 7-phosphate from sedoheptulose 7-phosphate: step 1/1. It functions in the pathway bacterial outer membrane biogenesis; LOS core biosynthesis. Functionally, catalyzes the isomerization of sedoheptulose 7-phosphate in D-glycero-D-manno-heptose 7-phosphate. This chain is Phosphoheptose isomerase, found in Neisseria meningitidis serogroup A / serotype 4A (strain DSM 15465 / Z2491).